The primary structure comprises 552 residues: Solute carrier family 22 member 6-B (552 aa).

The Cytoplasmic segment spans residues 1–16 (MAFQEILESLGGMGRY). The chain crosses the membrane as a helical span at residues 17 to 37 (QVIHVVLLSLPVFMLASHNLM). Residues 38–137 (QNFTAATPSH…LVCNHRRMRQ (100 aa)) lie on the Extracellular side of the membrane. A helical membrane pass occupies residues 138-158 (VAQSIYMAGVLVGSILFGGLS). The Cytoplasmic portion of the chain corresponds to 159–164 (DKFGRR). Residues 165–184 (PLNIWSNLQMFVTGICAAFS) traverse the membrane as a helical segment. Proline 185 is a topological domain (extracellular). A helical transmembrane segment spans residues 186 to 206 (NYIWYCIFRFLTGVAFSGIVL). Residues 207–225 (NSYSLTVEWIPTGNRAFTS) lie on the Cytoplasmic side of the membrane. Residues 226-246 (TATGYCYTMGQLVLVGLAFII) form a helical membrane-spanning segment. Residues 247-250 (RDWQ) lie on the Extracellular side of the membrane. A helical transmembrane segment spans residues 251-271 (WLQLAASIPFFFYFLYSWWIP). The Cytoplasmic portion of the chain corresponds to 272-336 (ESGRWLVLSG…YSALDLVRTP (65 aa)). The chain crosses the membrane as a helical span at residues 337-356 (VVRRISFCISCTWFSTSFAY). A topological domain (extracellular) is located at residue tyrosine 357. Residues 358-378 (GLALDLQSFGVSIYIIQIIFG) form a helical membrane-spanning segment. Residues 379-398 (TVDIPAKFISYFITTYVGRR) are Cytoplasmic-facing. A helical transmembrane segment spans residues 399–419 (VSQAITLILAGIAILVNISVP). The Extracellular portion of the chain corresponds to 420 to 426 (QDFQTVR). The helical transmembrane segment at 427–447 (TAMAVFGKGCLAASFNCLYLY) threads the bilayer. Residues 448–459 (TGELYPTVIRQT) are Cytoplasmic-facing. The chain crosses the membrane as a helical span at residues 460 to 480 (GMGLGAMMARLGGIIAPLAQM). The Extracellular portion of the chain corresponds to 481-487 (TGDIYHS). Residues 488 to 508 (LPLIIFGCLPILSGIAGCFLP) form a helical membrane-spanning segment. The Cytoplasmic segment spans residues 509–552 (ETLGVPLPETIEEVESPDKQQKDVNVSAKIPLKETELYNMKTDV).

It belongs to the major facilitator (TC 2.A.1) superfamily. Organic cation transporter (TC 2.A.1.19) family. In terms of processing, glycosylated. Glycosylation is necessary for proper targeting of the transporter to the plasma membrane.

It is found in the cell membrane. The protein resides in the basolateral cell membrane. Its subcellular location is the basal cell membrane. Its function is as follows. Involved in the renal elimination of endogenous and exogenous organic anions. Mediates the sodium-independent uptake of p-aminohippurate (PAH), cidofovir, adefovir, 9-(2-phosphonylmethoxyethyl) guanine (PMEG), 9-(2-phosphonylmethoxyethyl) diaminopurine (PMEDAP) and edaravone sulfate. PAH uptake is inhibited by furosemide, steviol, phorbol 12-myristate 13-acetate (PMA), calcium ionophore A23187, benzylpenicillin, furosemide, indomethacin, bumetamide, losartan, probenecid, phenol red, urate, and alpha-ketoglutarate. The protein is Solute carrier family 22 member 6-B (slc22a6-b) of Xenopus laevis (African clawed frog).